We begin with the raw amino-acid sequence, 640 residues long: Probable potassium transport system protein Kup 3 (640 aa).

Residues 1-15 show a composition bias toward low complexity; that stretch reads MTVDAAATPAEAPAT. The segment at 1-20 is disordered; that stretch reads MTVDAAATPAEAPATNGHGD. A run of 12 helical transmembrane segments spans residues 30-50, 71-91, 117-137, 155-175, 183-203, 224-244, 265-285, 294-314, 363-383, 385-405, 410-430, and 437-457; these read LTLG…LYAL, VISL…VVIL, ASII…DAVI, AAFD…LFAV, VAAF…IAAF, FMLH…LAVT, WLFV…ALII, PFFL…ATVA, LLLA…ALAS, YGIS…VVIW, WSPL…LTFL, and VLEG…LMYT.

The protein belongs to the HAK/KUP transporter (TC 2.A.72) family.

It localises to the cell inner membrane. It carries out the reaction K(+)(in) + H(+)(in) = K(+)(out) + H(+)(out). Transport of potassium into the cell. Likely operates as a K(+):H(+) symporter. This is Probable potassium transport system protein Kup 3 from Bradyrhizobium sp. (strain BTAi1 / ATCC BAA-1182).